The primary structure comprises 311 residues: E3 ubiquitin-protein ligase RNF126 (311 aa).

Cysteine 13, cysteine 16, cysteine 29, and cysteine 32 together coordinate Zn(2+). A C4-type zinc finger spans residues 13–32 (CHSCTAEIIPRLPEYTCPRC). 2 disordered regions span residues 42–62 (ETRN…NRPS) and 95–133 (GTSG…RRAA). The span at 101-114 (EEPRDGESRREHQS) shows a compositional bias: basic and acidic residues. The span at 123–133 (PRARLSTRRAA) shows a compositional bias: basic residues. An RING-type zinc finger spans residues 227 to 268 (CPVCKEDYTVGESVRQLPCNHLFHNDCIIPWLEQHDTCPVCR). Residues 274-311 (QNTATNPPGLTEMTFSSSSTSSSSSTSPTDENNAANNS) form a disordered region. A compositionally biased stretch (low complexity) spans 289-300 (SSSSTSSSSSTS). A compositionally biased stretch (polar residues) spans 301–311 (PTDENNAANNS).

The protein resides in the cytoplasm. The protein localises to the nucleus. It catalyses the reaction S-ubiquitinyl-[E2 ubiquitin-conjugating enzyme]-L-cysteine + [acceptor protein]-L-lysine = [E2 ubiquitin-conjugating enzyme]-L-cysteine + N(6)-ubiquitinyl-[acceptor protein]-L-lysine.. The protein operates within protein modification; protein ubiquitination. Its function is as follows. E3 ubiquitin-protein ligase that mediates ubiquitination oF target proteins. Depending on the associated E2 ligase, mediates 'Lys-27'-, 'Lys-29'-, 'Lys-48'- and/or 'Lys-63'-linked polyubiquitination of substrates. Part of a BAG6-dependent quality control process ensuring that proteins of the secretory pathway that are mislocalized to the cytosol are degraded by the proteasome. Probably acts by providing the ubiquitin ligase activity associated with the BAG6 complex and be responsible for ubiquitination of the hydrophobic mislocalized proteins and their targeting to the proteasome. This is E3 ubiquitin-protein ligase RNF126 from Xenopus tropicalis (Western clawed frog).